The chain runs to 196 residues: dCTP deaminase, dUMP-forming (196 aa).

DCTP is bound by residues 101–106 (KSSLGR), Asp119, 127–129 (TLE), Gln148, Tyr162, and Gln174. Catalysis depends on Glu129, which acts as the Proton donor/acceptor.

It belongs to the dCTP deaminase family. As to quaternary structure, homotrimer.

The catalysed reaction is dCTP + 2 H2O = dUMP + NH4(+) + diphosphate. The protein operates within pyrimidine metabolism; dUMP biosynthesis; dUMP from dCTP: step 1/1. Bifunctional enzyme that catalyzes both the deamination of dCTP to dUTP and the hydrolysis of dUTP to dUMP without releasing the toxic dUTP intermediate. The sequence is that of dCTP deaminase, dUMP-forming from Thermobifida fusca (strain YX).